Here is a 311-residue protein sequence, read N- to C-terminus: Probable dihydroorotate dehydrogenase A (fumarate) (311 aa).

Residues lysine 45, 69–73 (NSMGL), and asparagine 128 contribute to the substrate site. Residue 45–46 (KT) participates in FMN binding. An FMN-binding site is contributed by asparagine 128. The active-site Nucleophile is cysteine 131. 2 residues coordinate FMN: lysine 165 and valine 193. Substrate is bound at residue 194–195 (NS). Residues glycine 220, 248-249 (GG), and 270-271 (GT) each bind FMN.

This sequence belongs to the dihydroorotate dehydrogenase family. Type 1 subfamily. As to quaternary structure, homodimer. FMN serves as cofactor.

It is found in the cytoplasm. It carries out the reaction (S)-dihydroorotate + fumarate = orotate + succinate. The protein operates within pyrimidine metabolism; UMP biosynthesis via de novo pathway. Catalyzes the conversion of dihydroorotate to orotate with fumarate as the electron acceptor. This chain is Probable dihydroorotate dehydrogenase A (fumarate) (pyrDA), found in Streptococcus pneumoniae (strain ATCC BAA-255 / R6).